The primary structure comprises 309 residues: Histone-lysine N-methyltransferase SETMAR (309 aa).

The 64-residue stretch at 74–137 folds into the Pre-SET domain; that stretch reads PGCACIETPC…RCRNRVVQNG (64 aa). Zn(2+) is bound by residues Cys-76, Cys-78, Cys-83, Cys-88, Cys-90, Cys-119, Cys-123, Cys-125, and Cys-129. One can recognise an SET domain in the interval 140 to 264; it reads FLLQVFQTEK…PGEELSYDYS (125 aa). S-adenosyl-L-methionine-binding positions include 150–152, Tyr-193, Arg-221, and 224–225; these read KGW and NH. Zn(2+) is bound by residues Cys-227, Cys-288, Cys-290, and Cys-295. The 17-residue stretch at 284-300 folds into the Post-SET domain; the sequence is PRKPCYCGAQSCTTFLP.

The protein belongs to the class V-like SAM-binding methyltransferase superfamily.

The protein localises to the nucleus. It is found in the chromosome. It catalyses the reaction L-lysyl(36)-[histone H3] + 2 S-adenosyl-L-methionine = N(6),N(6)-dimethyl-L-lysyl(36)-[histone H3] + 2 S-adenosyl-L-homocysteine + 2 H(+). Functionally, histone methyltransferase that methylates 'Lys-4' and 'Lys-36' of histone H3, 2 specific tags for epigenetic transcriptional activation. Specifically mediates dimethylation of H3 'Lys-36'. The polypeptide is Histone-lysine N-methyltransferase SETMAR (Mus musculus (Mouse)).